The sequence spans 594 residues: Apolipoprotein N-acyltransferase (594 aa).

Over residues 1–29 (MIPAVTDDDPLEDPLDDDVAPGLDDAEPE) the composition is skewed to acidic residues. A disordered region spans residues 1–48 (MIPAVTDDDPLEDPLDDDVAPGLDDAEPEPEPRDEHDEPSRPATGSRI). At 1-67 (MIPAVTDDDP…RFGKGVLDRC (67 aa)) the chain is on the cytoplasmic side. Residues 30 to 40 (PEPRDEHDEPS) show a composition bias toward basic and acidic residues. Residues 68–87 (APLSAAIGGGLALWLSFPPI) form a helical membrane-spanning segment. Residues 88–116 (GWWFTAFPGLALLGWVLTRTATTKAGGFG) are Extracellular-facing. Residues 117–134 (YGVLFGLAFYVPLLPWIS) traverse the membrane as a helical segment. Residues 135 to 138 (GLVG) lie on the Cytoplasmic side of the membrane. A helical membrane pass occupies residues 139 to 160 (AVPWLALAFAESLFCGLFGLGA). The Extracellular portion of the chain corresponds to 161–221 (VVVVRLPGWP…IGGAPLVSFA (61 aa)). The helical transmembrane segment at 222–239 (VALIGFSLTLLTAQIVWW) threads the bilayer. Residues 240–251 (WRHGHKPGVPAP) lie on the Cytoplasmic side of the membrane. Residues 252–269 (AVMLPGVAIAASLLVTAL) form a helical membrane-spanning segment. Residues 270–554 (VWPQVRQSGT…TDLTPATKWG (285 aa)) lie on the Extracellular side of the membrane. Positions 287–543 (VTVAAVQGNV…PAYLDNQIRL (257 aa)) constitute a CN hydrolase domain. The active-site Proton acceptor is Glu-340. Lys-405 is an active-site residue. The active-site Nucleophile is the Cys-455. The helical transmembrane segment at 555-572 (PIVQAVLVIAGVAVLLIA) threads the bilayer. At 573-594 (ILHNGRFAPRMLRRRSATTVKR) the chain is on the cytoplasmic side.

Belongs to the CN hydrolase family. Apolipoprotein N-acyltransferase subfamily. As to quaternary structure, interacts with Ppm1 (AC A0QZ12) upon coexpression in E.coli, which increases the PPM synthase activity of Ppm1.

It is found in the cell membrane. It catalyses the reaction N-terminal S-1,2-diacyl-sn-glyceryl-L-cysteinyl-[lipoprotein] + a glycerophospholipid = N-acyl-S-1,2-diacyl-sn-glyceryl-L-cysteinyl-[lipoprotein] + a 2-acyl-sn-glycero-3-phospholipid + H(+). Its pathway is protein modification; lipoprotein biosynthesis (N-acyl transfer). Its function is as follows. Catalyzes the phospholipid dependent N-acylation of the N-terminal cysteine of apolipoprotein, the last step in lipoprotein maturation. Can transfer a number of fatty acids (C16 and C19, palmitic and probably tuberculostearic acids respectively are shown). Enhances the polyprenol monophosphomannose (PPM) synthase activity of Ppm1 (AC A0QZ12) without itself having PPM synthase catalytic activity. The sequence is that of Apolipoprotein N-acyltransferase from Mycolicibacterium smegmatis (strain ATCC 700084 / mc(2)155) (Mycobacterium smegmatis).